The following is a 267-amino-acid chain: 5'-nucleotidase SurE (267 aa).

A divalent metal cation-binding residues include D14, D15, S45, and N100.

It belongs to the SurE nucleotidase family. A divalent metal cation serves as cofactor.

It localises to the cytoplasm. It carries out the reaction a ribonucleoside 5'-phosphate + H2O = a ribonucleoside + phosphate. Nucleotidase that shows phosphatase activity on nucleoside 5'-monophosphates. This is 5'-nucleotidase SurE from Methanosarcina mazei (strain ATCC BAA-159 / DSM 3647 / Goe1 / Go1 / JCM 11833 / OCM 88) (Methanosarcina frisia).